The chain runs to 556 residues: 2-succinyl-5-enolpyruvyl-6-hydroxy-3-cyclohexene-1-carboxylate synthase (556 aa).

This sequence belongs to the TPP enzyme family. MenD subfamily. Homodimer. Mg(2+) is required as a cofactor. Mn(2+) serves as cofactor. It depends on thiamine diphosphate as a cofactor.

It carries out the reaction isochorismate + 2-oxoglutarate + H(+) = 5-enolpyruvoyl-6-hydroxy-2-succinyl-cyclohex-3-ene-1-carboxylate + CO2. It functions in the pathway quinol/quinone metabolism; 1,4-dihydroxy-2-naphthoate biosynthesis; 1,4-dihydroxy-2-naphthoate from chorismate: step 2/7. It participates in quinol/quinone metabolism; menaquinone biosynthesis. Catalyzes the thiamine diphosphate-dependent decarboxylation of 2-oxoglutarate and the subsequent addition of the resulting succinic semialdehyde-thiamine pyrophosphate anion to isochorismate to yield 2-succinyl-5-enolpyruvyl-6-hydroxy-3-cyclohexene-1-carboxylate (SEPHCHC). The sequence is that of 2-succinyl-5-enolpyruvyl-6-hydroxy-3-cyclohexene-1-carboxylate synthase from Salmonella dublin (strain CT_02021853).